A 737-amino-acid chain; its full sequence is 1,4-alpha-glucan branching enzyme GlgB (737 aa).

The active-site Nucleophile is the D419. E472 serves as the catalytic Proton donor.

This sequence belongs to the glycosyl hydrolase 13 family. GlgB subfamily. As to quaternary structure, monomer.

It carries out the reaction Transfers a segment of a (1-&gt;4)-alpha-D-glucan chain to a primary hydroxy group in a similar glucan chain.. It participates in glycan biosynthesis; glycogen biosynthesis. Its function is as follows. Catalyzes the formation of the alpha-1,6-glucosidic linkages in glycogen by scission of a 1,4-alpha-linked oligosaccharide from growing alpha-1,4-glucan chains and the subsequent attachment of the oligosaccharide to the alpha-1,6 position. This is 1,4-alpha-glucan branching enzyme GlgB from Mesorhizobium japonicum (strain LMG 29417 / CECT 9101 / MAFF 303099) (Mesorhizobium loti (strain MAFF 303099)).